Consider the following 364-residue polypeptide: Lipoyl synthase, chloroplastic (364 aa).

Residues 1–70 constitute a chloroplast transit peptide; the sequence is MEQTLFNPSI…PNVKKPEWLR (70 aa). Positions 32–52 are enriched in low complexity; sequence STNSPSSNTKTTTVTVPSKKT. Residues 32 to 64 form a disordered region; that stretch reads STNSPSSNTKTTTVTVPSKKTMGPYTGRDPNVK. [4Fe-4S] cluster is bound by residues C95, C100, C106, C126, C130, C133, and S341. The Radical SAM core domain maps to 109–330; sequence GGGDGIATAT…KEYGESIGFR (222 aa).

It belongs to the radical SAM superfamily. Lipoyl synthase family. Requires [4Fe-4S] cluster as cofactor.

The protein resides in the plastid. Its subcellular location is the chloroplast. The catalysed reaction is [[Fe-S] cluster scaffold protein carrying a second [4Fe-4S](2+) cluster] + N(6)-octanoyl-L-lysyl-[protein] + 2 oxidized [2Fe-2S]-[ferredoxin] + 2 S-adenosyl-L-methionine + 4 H(+) = [[Fe-S] cluster scaffold protein] + N(6)-[(R)-dihydrolipoyl]-L-lysyl-[protein] + 4 Fe(3+) + 2 hydrogen sulfide + 2 5'-deoxyadenosine + 2 L-methionine + 2 reduced [2Fe-2S]-[ferredoxin]. It participates in protein modification; protein lipoylation via endogenous pathway; protein N(6)-(lipoyl)lysine from octanoyl-[acyl-carrier-protein]: step 2/2. Functionally, catalyzes the radical-mediated insertion of two sulfur atoms into the C-6 and C-8 positions of the octanoyl moiety bound to the lipoyl domains of lipoate-dependent enzymes, thereby converting the octanoylated domains into lipoylated derivatives. The chain is Lipoyl synthase, chloroplastic from Ricinus communis (Castor bean).